Here is a 182-residue protein sequence, read N- to C-terminus: Malignant T-cell-amplified sequence 1 homolog (182 aa).

Positions Val-93–Asn-172 constitute a PUA domain.

Belongs to the MCTS1 family. Interacts with DENR.

The protein localises to the cytoplasm. Its function is as follows. Regulates translation as part of a complex with DENR. Specifically required for translational re-initiation in mRNAs containing upstream open reading frames (uORFs). Not required for standard translational initiation. Regulates expression of a subset of gene products including mbc, InR and EcR. In Drosophila melanogaster (Fruit fly), this protein is Malignant T-cell-amplified sequence 1 homolog.